We begin with the raw amino-acid sequence, 324 residues long: Glucokinase (324 aa).

6-11 contacts ATP; sequence IDIGGT.

The protein belongs to the bacterial glucokinase family.

Its subcellular location is the cytoplasm. It catalyses the reaction D-glucose + ATP = D-glucose 6-phosphate + ADP + H(+). The protein is Glucokinase of Zymomonas mobilis subsp. mobilis (strain ATCC 31821 / ZM4 / CP4).